The chain runs to 258 residues: Pimeloyl-[acyl-carrier protein] methyl ester esterase (258 aa).

The AB hydrolase-1 domain maps to 16-244 (LVLVHGWGMN…QSSHAPFMTE (229 aa)). Residues Trp-22, 82-83 (SL), and 146-150 (FMALQ) each bind substrate. Ser-82 serves as the catalytic Nucleophile. Active-site residues include Asp-210 and His-238. Residue His-238 coordinates substrate.

It belongs to the AB hydrolase superfamily. Carboxylesterase BioH family. As to quaternary structure, monomer.

The protein resides in the cytoplasm. It catalyses the reaction 6-carboxyhexanoyl-[ACP] methyl ester + H2O = 6-carboxyhexanoyl-[ACP] + methanol + H(+). It functions in the pathway cofactor biosynthesis; biotin biosynthesis. The physiological role of BioH is to remove the methyl group introduced by BioC when the pimeloyl moiety is complete. It allows to synthesize pimeloyl-ACP via the fatty acid synthetic pathway through the hydrolysis of the ester bonds of pimeloyl-ACP esters. This Vibrio atlanticus (strain LGP32) (Vibrio splendidus (strain Mel32)) protein is Pimeloyl-[acyl-carrier protein] methyl ester esterase.